The chain runs to 415 residues: 1-deoxy-D-xylulose 5-phosphate reductoisomerase (415 aa).

The NADPH site is built by threonine 10, glycine 11, serine 12, isoleucine 13, glycine 36, arginine 37, asparagine 38, and asparagine 128. Position 129 (lysine 129) interacts with 1-deoxy-D-xylulose 5-phosphate. Glutamate 130 is a binding site for NADPH. Aspartate 154 is a Mn(2+) binding site. Serine 155, glutamate 156, serine 192, and histidine 215 together coordinate 1-deoxy-D-xylulose 5-phosphate. Position 156 (glutamate 156) interacts with Mn(2+). Glycine 221 is a binding site for NADPH. Residues serine 228, asparagine 233, lysine 234, and glutamate 237 each coordinate 1-deoxy-D-xylulose 5-phosphate. Glutamate 237 provides a ligand contact to Mn(2+).

This sequence belongs to the DXR family. Mg(2+) serves as cofactor. It depends on Mn(2+) as a cofactor.

The catalysed reaction is 2-C-methyl-D-erythritol 4-phosphate + NADP(+) = 1-deoxy-D-xylulose 5-phosphate + NADPH + H(+). It participates in isoprenoid biosynthesis; isopentenyl diphosphate biosynthesis via DXP pathway; isopentenyl diphosphate from 1-deoxy-D-xylulose 5-phosphate: step 1/6. Functionally, catalyzes the NADPH-dependent rearrangement and reduction of 1-deoxy-D-xylulose-5-phosphate (DXP) to 2-C-methyl-D-erythritol 4-phosphate (MEP). The chain is 1-deoxy-D-xylulose 5-phosphate reductoisomerase from Synechococcus sp. (strain CC9605).